The chain runs to 1412 residues: Ecdysone-induced protein 75B, isoform B (1412 aa).

Residues 1–14 (MEAVQAAAAATSSG) show a composition bias toward low complexity. 4 disordered regions span residues 1 to 96 (MEAV…PGGT), 110 to 204 (QRAT…QQHV), 258 to 298 (QYQQ…VPPP), and 321 to 448 (HFQQ…SIPD). Over residues 15–25 (GSSGSVPGSGS) the composition is skewed to gly residues. A compositionally biased stretch (basic and acidic residues) spans 32-57 (IKTEPIDFEMLHLEENERQQDIEREP). Residues 58–68 (SSSNSNSNSNS) show a composition bias toward low complexity. Over residues 69-81 (LTPQRYTHVQVQT) the composition is skewed to polar residues. The segment covering 87–96 (PTGLTTPGGT) has biased composition (low complexity). A compositionally biased stretch (polar residues) spans 124 to 133 (YSQQQGTAAS). Positions 135–150 (SAPPETTALLTTTSGT) are enriched in low complexity. Over residues 151-164 (PQIIITRTLPSNQH) the composition is skewed to polar residues. Residues 177–203 (HHYQQQQPQRQQSPPPLHHQQQQQQQH) show a composition bias toward low complexity. A compositionally biased stretch (pro residues) spans 266–284 (PLAPPPPPPPPPPPPPPPQ). Low complexity-rich tracts occupy residues 323–371 (QQQQ…SSHI), 378–403 (SSSS…NSVM), and 417–447 (ASSS…SSIP). The nuclear receptor DNA-binding region spans 455-531 (TVLCRVCGDK…VGMSRDAVRF (77 aa)). 2 NR C4-type zinc fingers span residues 458–478 (CRVC…CEGC) and 495–514 (CTKN…CQYC). Positions 565-813 (DQPRLLAAVL…QQMWSMEDGN (249 aa)) constitute an NR LBD domain. Disordered stretches follow at residues 837 to 878 (KSPL…SALA), 984 to 1021 (LDSP…SVDD), 1044 to 1064 (VSVS…KRQI), 1108 to 1174 (AEAD…SSHS), 1204 to 1317 (ENST…SNSA), and 1368 to 1401 (VTVT…NPGL). Composition is skewed to low complexity over residues 854-866 (GSPS…GVSL), 1005-1017 (SSGG…SPRS), 1044-1058 (VSVS…STSS), 1110-1155 (ADAS…AQSQ), and 1163-1174 (SSPKASMASSHS). Polar residues-rich tracts occupy residues 1206-1219 (STAA…VGNR) and 1231-1253 (AVQN…QRQQ). Low complexity-rich tracts occupy residues 1254 to 1290 (SVSP…SASS), 1299 to 1317 (STSN…SNSA), and 1372 to 1400 (ASNG…PNPG).

It belongs to the nuclear hormone receptor family. NR1 subfamily.

It localises to the nucleus. Functionally, implicated in the regulation of ecdysone-triggered gene hierarchies. Probably plays a key role in mediating the regulation of the larval molt by 20-OH-ecdysone. The polypeptide is Ecdysone-induced protein 75B, isoform B (Eip75B) (Drosophila melanogaster (Fruit fly)).